A 218-amino-acid chain; its full sequence is Small ribosomal subunit protein uS7 (218 aa).

It belongs to the universal ribosomal protein uS7 family. Part of the 30S ribosomal subunit.

In terms of biological role, one of the primary rRNA binding proteins, it binds directly to 16S rRNA where it nucleates assembly of the head domain of the 30S subunit. Is located at the subunit interface close to the decoding center. The protein is Small ribosomal subunit protein uS7 (rps7) of Pyrococcus horikoshii (strain ATCC 700860 / DSM 12428 / JCM 9974 / NBRC 100139 / OT-3).